Here is a 2138-residue protein sequence, read N- to C-terminus: Conidial yellow pigment biosynthesis polyketide synthase melA (2138 aa).

The tract at residues Tyr-8–His-244 is N-terminal acylcarrier protein transacylase domain (SAT). The region spanning Gln-373 to Asp-804 is the Ketosynthase family 3 (KS3) domain. Residues Cys-545, His-680, and His-722 each act as for beta-ketoacyl synthase activity in the active site. Positions Phe-910–Glu-1229 are malonyl-CoA:ACP transacylase (MAT) domain. Ser-999 acts as the For acyl/malonyl transferase activity in catalysis. Positions Ser-1288–Pro-1601 are product template (PT) domain. Positions Gln-1292–Pro-1423 are N-terminal hotdog fold. The PKS/mFAS DH domain occupies Gln-1292 to Asp-1596. Catalysis depends on His-1324, which acts as the Proton acceptor; for dehydratase activity. A C-terminal hotdog fold region spans residues Ala-1451–Asp-1596. Catalysis depends on Asp-1509, which acts as the Proton donor; for dehydratase activity. The Carrier 1 domain maps to Pro-1640–Gly-1714. Residue Ser-1674 is modified to O-(pantetheine 4'-phosphoryl)serine. A disordered region spans residues Gln-1712 to Leu-1758. A compositionally biased stretch (low complexity) spans Met-1713–Ser-1739. The span at Pro-1740–Leu-1758 shows a compositional bias: polar residues. In terms of domain architecture, Carrier 2 spans Gln-1759 to Pro-1836. Position 1796 is an O-(pantetheine 4'-phosphoryl)serine (Ser-1796). The segment at Thr-1863–Met-2135 is claisen cyclase domain. Ser-1953 serves as the catalytic For Claisen cyclase activity.

It carries out the reaction 6 malonyl-CoA + acetyl-CoA + 6 H(+) = naphtopyrone YWA1 + 6 CO2 + 7 CoA + H2O. It participates in pigment biosynthesis. Its pathway is polyketide biosynthesis; heptaketide naphthopyrone YWA1 biosynthesis. Its function is as follows. Non-reducing polyketide synthase involved in the biosynthesis of a yellow conidial pigment. Probably forms the heptaketide naphthopyrene YWA1 via condensation of acetate units. The protein is Conidial yellow pigment biosynthesis polyketide synthase melA of Penicillium expansum (Blue mold rot fungus).